Consider the following 496-residue polypeptide: Isocitrate dehydrogenase [NADP] (496 aa).

2 residues coordinate NADP(+): L88 and T90. D-threo-isocitrate is bound by residues S98, N100, R104, R114, and R137. NADP(+) contacts are provided by N193, Q229, and K232. Residue D248 coordinates Mg(2+). 7 residues coordinate NADP(+): E277, G281, S282, A283, K285, Y286, and N293.

The protein belongs to the isocitrate and isopropylmalate dehydrogenases family. As to quaternary structure, homodimer. It depends on Mg(2+) as a cofactor. Requires Mn(2+) as cofactor.

The enzyme catalyses D-threo-isocitrate + NADP(+) = 2-oxoglutarate + CO2 + NADPH. Catalyzes the oxidative decarboxylation of isocitrate to 2-oxoglutarate and carbon dioxide with the concomitant reduction of NADP(+). The chain is Isocitrate dehydrogenase [NADP] (icd) from Thermus thermophilus (strain ATCC 27634 / DSM 579 / HB8).